Here is a 152-residue protein sequence, read N- to C-terminus: Protein Smg homolog (152 aa).

The protein belongs to the Smg family.

The polypeptide is Protein Smg homolog (Bordetella avium (strain 197N)).